The chain runs to 509 residues: Aspartyl/glutamyl-tRNA(Asn/Gln) amidotransferase subunit B (509 aa).

The protein belongs to the GatB/GatE family. GatB subfamily. In terms of assembly, heterotrimer of A, B and C subunits.

It carries out the reaction L-glutamyl-tRNA(Gln) + L-glutamine + ATP + H2O = L-glutaminyl-tRNA(Gln) + L-glutamate + ADP + phosphate + H(+). It catalyses the reaction L-aspartyl-tRNA(Asn) + L-glutamine + ATP + H2O = L-asparaginyl-tRNA(Asn) + L-glutamate + ADP + phosphate + 2 H(+). Its function is as follows. Allows the formation of correctly charged Asn-tRNA(Asn) or Gln-tRNA(Gln) through the transamidation of misacylated Asp-tRNA(Asn) or Glu-tRNA(Gln) in organisms which lack either or both of asparaginyl-tRNA or glutaminyl-tRNA synthetases. The reaction takes place in the presence of glutamine and ATP through an activated phospho-Asp-tRNA(Asn) or phospho-Glu-tRNA(Gln). This Psychrobacter cryohalolentis (strain ATCC BAA-1226 / DSM 17306 / VKM B-2378 / K5) protein is Aspartyl/glutamyl-tRNA(Asn/Gln) amidotransferase subunit B.